The primary structure comprises 367 residues: 3-isopropylmalate dehydrogenase (367 aa).

75 to 88 is a binding site for NAD(+); that stretch reads GPKWDGIERSKRPE. Substrate contacts are provided by Arg-95, Arg-105, Arg-133, and Asp-230. The Mg(2+) site is built by Asp-230, Asp-254, and Asp-258. 288–300 provides a ligand contact to NAD(+); that stretch reads GSAPDIAGQDIAN.

Belongs to the isocitrate and isopropylmalate dehydrogenases family. LeuB type 1 subfamily. Homodimer. Mg(2+) is required as a cofactor. It depends on Mn(2+) as a cofactor.

It is found in the cytoplasm. The catalysed reaction is (2R,3S)-3-isopropylmalate + NAD(+) = 4-methyl-2-oxopentanoate + CO2 + NADH. It functions in the pathway amino-acid biosynthesis; L-leucine biosynthesis; L-leucine from 3-methyl-2-oxobutanoate: step 3/4. Its function is as follows. Catalyzes the oxidation of 3-carboxy-2-hydroxy-4-methylpentanoate (3-isopropylmalate) to 3-carboxy-4-methyl-2-oxopentanoate. The product decarboxylates to 4-methyl-2 oxopentanoate. The sequence is that of 3-isopropylmalate dehydrogenase from Psychrobacter cryohalolentis (strain ATCC BAA-1226 / DSM 17306 / VKM B-2378 / K5).